Reading from the N-terminus, the 1091-residue chain is ATPase family AAA domain-containing protein 2 (1091 aa).

The tract at residues 32-211 (LEDLGVFNET…HFERRRKRSR (180 aa)) is disordered. The segment covering 53-62 (KQKDIQRTDE) has biased composition (basic and acidic residues). Over residues 74–119 (SSEEGEDQEHEDDGEDEDDEDEDDDDDDDDDDDDDEDDEDEEDGEE) the composition is skewed to acidic residues. A Glycyl lysine isopeptide (Lys-Gly) (interchain with G-Cter in SUMO2) cross-link involves residue lysine 148. Phosphoserine occurs at positions 158, 168, 173, and 241. 298–305 (GPPGTGKT) serves as a coordination point for ATP. 2 positions are modified to phosphoserine: serine 577 and serine 582. Coiled coils occupy residues 801 to 825 (LTAEEVKRLEEQEEDTFRELRIFLR) and 917 to 943 (YAIIKEELDEDFEQLCEEIQESRKKRG). A Bromo domain is found at 811–923 (EQEEDTFREL…DTAYAIIKEE (113 aa)). Residue lysine 959 forms a Glycyl lysine isopeptide (Lys-Gly) (interchain with G-Cter in SUMO2) linkage. The segment at 961–985 (NSTLVGDKRSDPEQNEKLKTPSTPV) is disordered. Residues 966 to 979 (GDKRSDPEQNEKLK) show a composition bias toward basic and acidic residues. Serine 970 bears the Phosphoserine mark. Lysine 979 participates in a covalent cross-link: Glycyl lysine isopeptide (Lys-Gly) (interchain with G-Cter in SUMO2). Residues threonine 980 and threonine 983 each carry the phosphothreonine modification. Serine 1003 carries the phosphoserine modification. At threonine 1024 the chain carries Phosphothreonine.

It belongs to the AAA ATPase family. Interaction with ESR1 and NCOA3 is enhanced by estradiol. Interacts with acetylated lysine residues on histone H1.4, H2A, H2B and H3 (in vitro).

Its subcellular location is the nucleus. It carries out the reaction ATP + H2O = ADP + phosphate + H(+). May be a transcriptional coactivator of the nuclear receptor ESR1 required to induce the expression of a subset of estradiol target genes, such as CCND1, MYC and E2F1. May play a role in the recruitment or occupancy of CREBBP at some ESR1 target gene promoters. May be required for histone hyperacetylation. This chain is ATPase family AAA domain-containing protein 2 (ATAD2), found in Pongo abelii (Sumatran orangutan).